Reading from the N-terminus, the 376-residue chain is UDP-N-acetylglucosamine 2-epimerase (376 aa).

Residues Arg-10, Lys-15, Asp-95, Glu-117, His-213, Gln-271, Phe-276, 290-292 (SGG), Glu-296, and Arg-313 contribute to the substrate site.

This sequence belongs to the UDP-N-acetylglucosamine 2-epimerase family. As to quaternary structure, homodimer.

It localises to the cytoplasm. It catalyses the reaction UDP-N-acetyl-alpha-D-glucosamine = UDP-N-acetyl-alpha-D-mannosamine. It participates in bacterial outer membrane biogenesis; enterobacterial common antigen biosynthesis. In terms of biological role, catalyzes the reversible epimerization at C-2 of UDP-N-acetylglucosamine (UDP-GlcNAc) and thereby provides bacteria with UDP-N-acetylmannosamine (UDP-ManNAc), the activated donor of ManNAc residues. This is UDP-N-acetylglucosamine 2-epimerase from Escherichia coli O157:H7.